The primary structure comprises 1413 residues: ABC-type transporter vrcC (1413 aa).

An ABC transporter 1 domain is found at 108-365 (VWFEALALAR…FLDMGFACPE (258 aa)). Asn-289 carries N-linked (GlcNAc...) asparagine glycosylation. A helical membrane pass occupies residues 476–496 (VTISSLIGNVITALVIASIFY). N-linked (GlcNAc...) asparagine glycosylation occurs at Asn-501. The next 2 membrane-spanning stretches (helical) occupy residues 510–530 (ALLF…MLTL) and 564–584 (VLNA…VLLG). Asn-675 carries N-linked (GlcNAc...) asparagine glycosylation. The helical transmembrane segment at 683–703 (IGIILAFMVVLGAIYLVATDF) threads the bilayer. The tract at residues 725 to 748 (SGKPDDFEGGSDRNASQEKSKSDR) is disordered. Asn-738 carries N-linked (GlcNAc...) asparagine glycosylation. A compositionally biased stretch (basic and acidic residues) spans 739 to 748 (ASQEKSKSDR). One can recognise an ABC transporter 2 domain in the interval 761–1003 (FQWQDVCFDI…ILIDYFVRNG (243 aa)). Transmembrane regions (helical) follow at residues 1105-1125 (IYIY…GFSL), 1142-1162 (IFLL…HFVT), 1191-1211 (LFWN…PIGM), 1230-1250 (LLIW…IAAL), 1266-1286 (LCLL…FWIF), and 1290-1310 (VSPF…DTTV). Residue Asn-1324 is glycosylated (N-linked (GlcNAc...) asparagine). Residues 1378 to 1398 (FGLMWVFIFTNIVAACLLYWW) traverse the membrane as a helical segment.

Belongs to the ABC transporter superfamily. ABCG family. PDR (TC 3.A.1.205) subfamily.

It is found in the cell membrane. Functionally, ABC-type transporter; part of the gene cluster that mediates the biosynthesis of the sesterterpene variecolin. VrcC is probably involved in the secretion of variecolin. This is ABC-type transporter vrcC from Aspergillus aculeatus (strain ATCC 16872 / CBS 172.66 / WB 5094).